The sequence spans 164 residues: Phosphopantetheine adenylyltransferase (164 aa).

S10 contacts substrate. ATP-binding positions include 10–11 and H18; that span reads SF. Positions 42, 74, and 88 each coordinate substrate. ATP is bound by residues 89–91, E99, and 124–130; these read GLR and YSFLSSS.

It belongs to the bacterial CoaD family. In terms of assembly, homohexamer. Mg(2+) serves as cofactor.

The protein resides in the cytoplasm. The catalysed reaction is (R)-4'-phosphopantetheine + ATP + H(+) = 3'-dephospho-CoA + diphosphate. It participates in cofactor biosynthesis; coenzyme A biosynthesis; CoA from (R)-pantothenate: step 4/5. Functionally, reversibly transfers an adenylyl group from ATP to 4'-phosphopantetheine, yielding dephospho-CoA (dPCoA) and pyrophosphate. This is Phosphopantetheine adenylyltransferase from Exiguobacterium sp. (strain ATCC BAA-1283 / AT1b).